The sequence spans 305 residues: MDSVKKYLYTCDHVGFLELTKETWKNRWFPSQVPLQGDVCCVDMLNERDLEFYKFLFTFLGMAEKLVNINIEDLLSQFDSHDISHYYAEQMAMENIHGKVYANILNMLFKNNITEVYSYACDIMNDSALQEKLRWLNGRVTEASDKAEKILLFLLVEGIFFISSFFSIGLFRVRGIMNGICLANDYIARDEMLHTSAAALLYNTMTKSSERPSEDWIYKLFREAVEVEFKFIAAKGYGVSLVNVHEIRQFLQATADRILESINLNPIYGSLPPENCPLAYTSSTKSVNFFERDNSDYTGTLTNDL.

E64, E94, and H97 together coordinate Fe cation. Y101 is a catalytic residue. The chain crosses the membrane as a helical span at residues 150-170; that stretch reads ILLFLLVEGIFFISSFFSIGL. Fe cation is bound by residues E157, E191, and H194.

Belongs to the ribonucleoside diphosphate reductase small chain family. In terms of assembly, heterotetramer composed of a homodimer of the large subunit (R1) and a homodimer of the small subunit (R2). Larger multisubunit protein complex are also active, composed of (R1)n(R2)n. Fe cation is required as a cofactor.

It is found in the host membrane. It catalyses the reaction a 2'-deoxyribonucleoside 5'-diphosphate + [thioredoxin]-disulfide + H2O = a ribonucleoside 5'-diphosphate + [thioredoxin]-dithiol. Its function is as follows. Ribonucleoside-diphosphate reductase holoenzyme provides the precursors necessary for viral DNA synthesis. Allows virus growth in non-dividing cells, as well as reactivation from latency in infected hosts. Catalyzes the biosynthesis of deoxyribonucleotides from the corresponding ribonucleotides. This is Ribonucleoside-diphosphate reductase small subunit from Saimiri sciureus (Common squirrel monkey).